We begin with the raw amino-acid sequence, 83 residues long: DNA-directed RNA polymerase subunit omega (83 aa).

This sequence belongs to the RNA polymerase subunit omega family. In terms of assembly, the RNAP catalytic core consists of 2 alpha, 1 beta, 1 beta' and 1 omega subunit. When a sigma factor is associated with the core the holoenzyme is formed, which can initiate transcription.

It carries out the reaction RNA(n) + a ribonucleoside 5'-triphosphate = RNA(n+1) + diphosphate. Its function is as follows. Promotes RNA polymerase assembly. Latches the N- and C-terminal regions of the beta' subunit thereby facilitating its interaction with the beta and alpha subunits. This chain is DNA-directed RNA polymerase subunit omega, found in Chromohalobacter salexigens (strain ATCC BAA-138 / DSM 3043 / CIP 106854 / NCIMB 13768 / 1H11).